The sequence spans 590 residues: Phosphatidylserine decarboxylase proenzyme 1, mitochondrial (590 aa).

The transit peptide at 1–59 directs the protein to the mitochondrion; sequence MPLKPISFRWSKTSVRSVPNPFMYGPDNLNKPLSRASQMAERVHQQTPSSTNYQQRRYF. Residues 60–140 are Mitochondrial matrix-facing; the sequence is SYYYYQFPKI…GKERRRFIRW (81 aa). The chain crosses the membrane as a helical span at residues 141 to 159; that stretch reads WTVTSLTIVLGGVYAKIKY. The Mitochondrial intermembrane segment spans residues 160–590; that stretch reads ERGDHEENPY…KVGQSLGGFV (431 aa). Active-site charge relay system; for autoendoproteolytic cleavage activity residues include Asp-260, His-403, and Ser-558. Residue Ser-558 is the Schiff-base intermediate with substrate; via pyruvic acid; for decarboxylase activity of the active site. The residue at position 558 (Ser-558) is a Pyruvic acid (Ser); by autocatalysis.

This sequence belongs to the phosphatidylserine decarboxylase family. PSD-B subfamily. Eukaryotic type I sub-subfamily. As to quaternary structure, heterodimer of a large membrane-associated beta subunit and a small pyruvoyl-containing alpha subunit. Pyruvate is required as a cofactor. Post-translationally, is synthesized initially as an inactive proenzyme. Formation of the active enzyme involves a self-maturation process in which the active site pyruvoyl group is generated from an internal serine residue via an autocatalytic post-translational modification. Two non-identical subunits are generated from the proenzyme in this reaction, and the pyruvate is formed at the N-terminus of the alpha chain, which is derived from the carboxyl end of the proenzyme. The autoendoproteolytic cleavage occurs by a canonical serine protease mechanism, in which the side chain hydroxyl group of the serine supplies its oxygen atom to form the C-terminus of the beta chain, while the remainder of the serine residue undergoes an oxidative deamination to produce ammonia and the pyruvoyl prosthetic group on the alpha chain. During this reaction, the Ser that is part of the protease active site of the proenzyme becomes the pyruvoyl prosthetic group, which constitutes an essential element of the active site of the mature decarboxylase.

It localises to the mitochondrion inner membrane. The enzyme catalyses a 1,2-diacyl-sn-glycero-3-phospho-L-serine + H(+) = a 1,2-diacyl-sn-glycero-3-phosphoethanolamine + CO2. Its pathway is phospholipid metabolism; phosphatidylethanolamine biosynthesis; phosphatidylethanolamine from CDP-diacylglycerol: step 2/2. In terms of biological role, catalyzes the formation of phosphatidylethanolamine (PtdEtn) from phosphatidylserine (PtdSer). Plays a central role in phospholipid metabolism and in the interorganelle trafficking of phosphatidylserine. Important for virulence. The chain is Phosphatidylserine decarboxylase proenzyme 1, mitochondrial from Candida albicans (strain SC5314 / ATCC MYA-2876) (Yeast).